We begin with the raw amino-acid sequence, 162 residues long: Shikimate kinase (162 aa).

Residue 11 to 16 participates in ATP binding; sequence GSGKSS. Mg(2+) is bound at residue serine 15. Substrate-binding residues include aspartate 33, arginine 57, and glycine 80. Arginine 116 serves as a coordination point for ATP. A substrate-binding site is contributed by arginine 132.

It belongs to the shikimate kinase family. As to quaternary structure, monomer. Requires Mg(2+) as cofactor.

It is found in the cytoplasm. The catalysed reaction is shikimate + ATP = 3-phosphoshikimate + ADP + H(+). It participates in metabolic intermediate biosynthesis; chorismate biosynthesis; chorismate from D-erythrose 4-phosphate and phosphoenolpyruvate: step 5/7. Catalyzes the specific phosphorylation of the 3-hydroxyl group of shikimic acid using ATP as a cosubstrate. This is Shikimate kinase from Helicobacter acinonychis (strain Sheeba).